The following is a 248-amino-acid chain: NAD(P)H-quinone oxidoreductase subunit K 1 (248 aa).

Residues M1–S2 constitute a propeptide that is removed on maturation. C62, C63, C127, and C158 together coordinate [4Fe-4S] cluster. Residues M228–G248 are disordered. The span at L236–G248 shows a compositional bias: polar residues.

Belongs to the complex I 20 kDa subunit family. As to quaternary structure, NDH-1 can be composed of about 15 different subunits; different subcomplexes with different compositions have been identified which probably have different functions. [4Fe-4S] cluster serves as cofactor.

The protein resides in the cellular thylakoid membrane. It catalyses the reaction a plastoquinone + NADH + (n+1) H(+)(in) = a plastoquinol + NAD(+) + n H(+)(out). The catalysed reaction is a plastoquinone + NADPH + (n+1) H(+)(in) = a plastoquinol + NADP(+) + n H(+)(out). Its function is as follows. NDH-1 shuttles electrons from an unknown electron donor, via FMN and iron-sulfur (Fe-S) centers, to quinones in the respiratory and/or the photosynthetic chain. The immediate electron acceptor for the enzyme in this species is believed to be plastoquinone. Couples the redox reaction to proton translocation, and thus conserves the redox energy in a proton gradient. Cyanobacterial NDH-1 also plays a role in inorganic carbon-concentration. This Synechocystis sp. (strain ATCC 27184 / PCC 6803 / Kazusa) protein is NAD(P)H-quinone oxidoreductase subunit K 1.